Reading from the N-terminus, the 377-residue chain is Protein-tyrosine sulfotransferase 2 (377 aa).

The Cytoplasmic portion of the chain corresponds to 1-8; sequence MRLSVRRV. Residues 9-25 form a helical; Signal-anchor for type II membrane protein membrane-spanning segment; the sequence is LLAAGCALVLVLAVQLG. Residues 26-377 lie on the Lumenal side of the membrane; that stretch reads QQVLECRAVL…NSTSSHLGSS (352 aa). 78–82 serves as a coordination point for 3'-phosphoadenylyl sulfate; it reads RSGTT. C96 and C156 are joined by a disulfide. The active-site Proton donor/acceptor is the E99. Residues 101 to 105 are interaction with peptide substrate; the sequence is RIIPR. 3'-phosphoadenylyl sulfate is bound by residues R183, S191, and R195. A disulfide bridge links C225 with C233. 3'-phosphoadenylyl sulfate-binding positions include Y238, 285–294, and K300; that span reads STDQVIKPVN. N-linked (GlcNAc...) asparagine glycans are attached at residues N343 and N368.

This sequence belongs to the protein sulfotransferase family. As to quaternary structure, homodimer. Can also form heterodimers with TPST1. In terms of processing, N-glycosylated. Widely expressed.

The protein localises to the golgi apparatus membrane. It carries out the reaction L-tyrosyl-[protein] + 3'-phosphoadenylyl sulfate = O-sulfo-L-tyrosine-[protein] + adenosine 3',5'-bisphosphate + H(+). Its function is as follows. Catalyzes the O-sulfation of tyrosine residues within acidic motifs of polypeptides, using 3'-phosphoadenylyl sulfate (PAPS) as cosubstrate. This chain is Protein-tyrosine sulfotransferase 2 (TPST2), found in Homo sapiens (Human).